Here is a 75-residue protein sequence, read N- to C-terminus: DNA-directed RNA polymerase subunit Rpo6 (75 aa).

Belongs to the archaeal Rpo6/eukaryotic RPB6 RNA polymerase subunit family. As to quaternary structure, part of the RNA polymerase complex.

The protein resides in the cytoplasm. The catalysed reaction is RNA(n) + a ribonucleoside 5'-triphosphate = RNA(n+1) + diphosphate. DNA-dependent RNA polymerase (RNAP) catalyzes the transcription of DNA into RNA using the four ribonucleoside triphosphates as substrates. This chain is DNA-directed RNA polymerase subunit Rpo6, found in Archaeoglobus fulgidus (strain ATCC 49558 / DSM 4304 / JCM 9628 / NBRC 100126 / VC-16).